We begin with the raw amino-acid sequence, 102 residues long: Small ribosomal subunit protein uS10 (102 aa).

This sequence belongs to the universal ribosomal protein uS10 family. In terms of assembly, part of the 30S ribosomal subunit.

Involved in the binding of tRNA to the ribosomes. The sequence is that of Small ribosomal subunit protein uS10 from Planobispora rosea.